The primary structure comprises 802 residues: Phenylalanine--tRNA ligase beta subunit (802 aa).

One can recognise a tRNA-binding domain in the interval 39 to 150; the sequence is AKALKPFTIA…ADAPIGAAYA (112 aa). Residues 400–475 enclose the B5 domain; it reads GDDRVIDFPV…RIYGVDKVPM (76 aa). Positions 453, 459, 462, and 463 each coordinate Mg(2+). An FDX-ACB domain is found at 708-801; that stretch reads SAFQPVSRDF…VTKKTGGTLR (94 aa).

This sequence belongs to the phenylalanyl-tRNA synthetase beta subunit family. Type 1 subfamily. Tetramer of two alpha and two beta subunits. Mg(2+) serves as cofactor.

The protein resides in the cytoplasm. The catalysed reaction is tRNA(Phe) + L-phenylalanine + ATP = L-phenylalanyl-tRNA(Phe) + AMP + diphosphate + H(+). The sequence is that of Phenylalanine--tRNA ligase beta subunit from Bradyrhizobium diazoefficiens (strain JCM 10833 / BCRC 13528 / IAM 13628 / NBRC 14792 / USDA 110).